The chain runs to 256 residues: Zinc metalloprotease (256 aa).

Catalysis depends on His-74, which acts as the Proton donor.

Belongs to the peptidase M4 family. Requires Zn(2+) as cofactor.

It is found in the secreted. Its function is as follows. May play a role in ulcer formation. Proteolytic digestion of gastric mucus has been suggested as an important mechanism by which its pathogenicity is at least partly exerted. In Helicobacter pylori (Campylobacter pylori), this protein is Zinc metalloprotease (hap).